A 173-amino-acid chain; its full sequence is Translation initiation factor IF-3 (173 aa).

It belongs to the IF-3 family. Monomer.

The protein localises to the cytoplasm. Its function is as follows. IF-3 binds to the 30S ribosomal subunit and shifts the equilibrium between 70S ribosomes and their 50S and 30S subunits in favor of the free subunits, thus enhancing the availability of 30S subunits on which protein synthesis initiation begins. This Ehrlichia chaffeensis (strain ATCC CRL-10679 / Arkansas) protein is Translation initiation factor IF-3.